The sequence spans 287 residues: Energy-coupling factor transporter ATP-binding protein EcfA (287 aa).

Residues 19–252 form the ABC transporter domain; that stretch reads FEIQNVSFSY…EEFLASSALD (234 aa). Position 52 to 59 (52 to 59) interacts with ATP; it reads GHNGSGKS.

This sequence belongs to the ABC transporter superfamily. Energy-coupling factor EcfA family. As to quaternary structure, forms a stable energy-coupling factor (ECF) transporter complex composed of 2 membrane-embedded substrate-binding proteins (S component), 2 ATP-binding proteins (A component) and 2 transmembrane proteins (T component).

It is found in the cell membrane. In terms of biological role, ATP-binding (A) component of a common energy-coupling factor (ECF) ABC-transporter complex. Unlike classic ABC transporters this ECF transporter provides the energy necessary to transport a number of different substrates. The polypeptide is Energy-coupling factor transporter ATP-binding protein EcfA (Malacoplasma penetrans (strain HF-2) (Mycoplasma penetrans)).